A 459-amino-acid polypeptide reads, in one-letter code: MSLWGGRFLDESNETFKKFNASLPFDYILVKEDIFASIAWSKSLVEVGVLTQEEQKKIESALISLKEEIYNNSKKILESDYEDIHSWIEANLIKKIGELGKKLHTGRSRNDQITTDLKLWCKRKIFVLLDSIINLQKNFIFVAELNDDVIMPGYTHLQRAQPITFSYWCLAYVQMFKRDVSRLKDILKRLDISPLGSGALSGTAWNINRKKLAISMGFSSETNNALDSVSDRDYLIELLSASSISMTHLSRFSEDLIFFNSSEANFIELSDSITSGSSLMPQKKNPDALELIRAKCGRVHGALVSILVVLKSLPLSYNKDLQEDKEGLFDSLKTWNDSLLIASLVLKNIKLNRLSCRKAAEKGYSNATEIADYLVKKGMTFREAHHVSGKLVLRAIKENKSLNDLDLSIFQSYSALITDDIYKNITLEACLEKRSSKGGVAPNEIRKEIFKEKERLNIL.

This sequence belongs to the lyase 1 family. Argininosuccinate lyase subfamily.

The protein localises to the cytoplasm. It catalyses the reaction 2-(N(omega)-L-arginino)succinate = fumarate + L-arginine. The protein operates within amino-acid biosynthesis; L-arginine biosynthesis; L-arginine from L-ornithine and carbamoyl phosphate: step 3/3. The sequence is that of Argininosuccinate lyase from Buchnera aphidicola subsp. Schizaphis graminum (strain Sg).